Here is a 428-residue protein sequence, read N- to C-terminus: tRNA modification GTPase MnmE (428 aa).

Residues Arg-20, Glu-77, and Lys-117 each coordinate (6S)-5-formyl-5,6,7,8-tetrahydrofolate. The TrmE-type G domain maps to 213–351 (GFEVAIVGSP…LVSRISDTLR (139 aa)). Residues 223 to 228 (NVGKST), 242 to 248 (SEYAGTT), and 267 to 270 (DTAG) contribute to the GTP site. The Mg(2+) site is built by Ser-227 and Thr-248. Position 428 (Lys-428) interacts with (6S)-5-formyl-5,6,7,8-tetrahydrofolate.

It belongs to the TRAFAC class TrmE-Era-EngA-EngB-Septin-like GTPase superfamily. TrmE GTPase family. As to quaternary structure, homodimer. Heterotetramer of two MnmE and two MnmG subunits. K(+) serves as cofactor.

It localises to the cytoplasm. In terms of biological role, exhibits a very high intrinsic GTPase hydrolysis rate. Involved in the addition of a carboxymethylaminomethyl (cmnm) group at the wobble position (U34) of certain tRNAs, forming tRNA-cmnm(5)s(2)U34. This Ruegeria sp. (strain TM1040) (Silicibacter sp.) protein is tRNA modification GTPase MnmE.